We begin with the raw amino-acid sequence, 79 residues long: Conotoxin LiCr173 (79 aa).

The N-terminal stretch at 1–20 is a signal peptide; sequence MSGLGTMVLTLLLLVFMVTS. A propeptide spanning residues 21–46 is cleaved from the precursor; it reads HQDGGKKQATQRNAVNIRRRKSITQR. 3 disulfides stabilise this stretch: C52/C64, C56/C73, and C63/C77. F78 carries the phenylalanine amide modification.

Belongs to the conotoxin O3 superfamily. In terms of tissue distribution, expressed by the venom duct.

It is found in the secreted. The chain is Conotoxin LiCr173 from Conus lividus (Livid cone).